The primary structure comprises 644 residues: DNA mismatch repair protein MutL (644 aa).

2 disordered regions span residues 338-390 and 416-445; these read RPNA…ERPA and QPQE…DDTQ. Low complexity-rich tracts occupy residues 349-366 and 416-427; these read EATP…EASA and QPQEAAEEAAGT.

This sequence belongs to the DNA mismatch repair MutL/HexB family.

Its function is as follows. This protein is involved in the repair of mismatches in DNA. It is required for dam-dependent methyl-directed DNA mismatch repair. May act as a 'molecular matchmaker', a protein that promotes the formation of a stable complex between two or more DNA-binding proteins in an ATP-dependent manner without itself being part of a final effector complex. The protein is DNA mismatch repair protein MutL of Chromohalobacter salexigens (strain ATCC BAA-138 / DSM 3043 / CIP 106854 / NCIMB 13768 / 1H11).